We begin with the raw amino-acid sequence, 62 residues long: Protein translocase subunit SecE (62 aa).

The chain crosses the membrane as a helical span at residues 40–60 (LLVLAVVGVLAYIIQLALTLI).

It belongs to the SecE/SEC61-gamma family. As to quaternary structure, component of the Sec protein translocase complex. Heterotrimer consisting of SecY (alpha), SecG (beta) and SecE (gamma) subunits. The heterotrimers can form oligomers, although 1 heterotrimer is thought to be able to translocate proteins. Interacts with the ribosome. May interact with SecDF, and other proteins may be involved.

It localises to the cell membrane. Essential subunit of the Sec protein translocation channel SecYEG. Clamps together the 2 halves of SecY. May contact the channel plug during translocation. The sequence is that of Protein translocase subunit SecE from Saccharolobus solfataricus (strain ATCC 35092 / DSM 1617 / JCM 11322 / P2) (Sulfolobus solfataricus).